An 882-amino-acid chain; its full sequence is Piwi-like protein 3 (882 aa).

A compositionally biased stretch (basic residues) spans 1-15; sequence MPGRARTRARGRARR. The interval 1-91 is disordered; it reads MPGRARTRAR…EAGLHTAPLQ (91 aa). A compositionally biased stretch (polar residues) spans 32–46; the sequence is SATTQEPPQLQSTPR. Positions 293–406 constitute a PAZ domain; sequence TAYDFIKRTS…LIPQLCHMTG (114 aa). The 291-residue stretch at 578-868 folds into the Piwi domain; that stretch reads KVICILPNDD…LAYLVGQSIH (291 aa).

This sequence belongs to the argonaute family. Piwi subfamily. Expressed in testis.

The protein resides in the cytoplasm. Its function is as follows. May play a role during spermatogenesis by repressing transposable elements and preventing their mobilization, which is essential for the germline integrity. Acts via the piRNA metabolic process, which mediates the repression of transposable elements during meiosis by forming complexes composed of piRNAs and Piwi proteins and govern the methylation and subsequent repression of transposons. Directly binds piRNAs, a class of 24 to 30 nucleotide RNAs that are generated by a Dicer-independent mechanism and are primarily derived from transposons and other repeated sequence elements. Besides their function in transposable elements repression, piRNAs are probably involved in other processes during meiosis such as translation regulation. This is Piwi-like protein 3 (PIWIL3) from Homo sapiens (Human).